Here is an 861-residue protein sequence, read N- to C-terminus: MKNDNRIIKNTIKQFKEKLCKDFSQKANITSITRKLAVFIDTILIQLFIKNKLHFGDNFCLLALGSYGRRELQLHSDIDLLILHTEKVSNIQLQRAQKFIQDCWDVGLEVSHQITTVSSCANLASQDLSVISTIMDMFLLCGHGALMEELIYQTHTLHMWPSHQYFFAKLQEQQNRYAKYGETAYNLEPNIKNGPGGLRDLQILLSISKRHFKIKKLAEGIGYGFITDKEYEELKYCQNFLWRVRFALHMLAGKPEERLSFDYQVKLAQFFGYQDQSHILAIEQFMKDYFKVIKRNRELNEMLLQWFNETIVYHQKQKIIRLDDEFQLSNRFIEVRNNRVFKQNPQSILKLFYWLVKRPDIEGVRASTIRLIRESLFLMGKRFRESKETANIFINIFRTGNDPYDALQRMNRYGVLAHYLDCFATVTGQMQYDLFHAYTVDQHTLFVIRNISRFKKNEYAKQFPLCAKIISALEKPEILYLGALFHDIAKGRGGDHSELGAIEAQQFTQRHYMEAEDSKLIVWLVRYHLLMSQTAQRKDIYDPKTIEQFCQLLPHARYLDYLYLLTVADICGTNPTLWNAWKDSLLKELYHAAKTRLHKQQELLDEAALISIRKQYAMDILISDGISSRVIQDLWSQFKGKYFLHESPEVIARHTKAILNSKQFPVVIIMPHHSQGGTEVFIYMPHKDERFTITTSVLSNHHVTIQEAAIITCDNQFDLDTYIILDENNQAFLNEQRARDIQKSLCDHLANTGRLPAVSRRRLSRALTHFNVKTQINFIDDNTNHQTQLFLVTNDRPGLLATISRVFLTLNIHLHNAKIATAGERVEDMFYISNQTGYSLNHEEKTILKEKLILEISKSKY.

Residues 1 to 321 form a uridylyltransferase region; the sequence is MKNDNRIIKN…VYHQKQKIIR (321 aa). A uridylyl-removing region spans residues 322–678; that stretch reads LDDEFQLSNR…IMPHHSQGGT (357 aa). One can recognise an HD domain in the interval 440 to 562; the sequence is VDQHTLFVIR…LPHARYLDYL (123 aa). 2 consecutive ACT domains span residues 679 to 760 and 788 to 861; these read EVFI…AVSR and QLFL…KSKY.

It belongs to the GlnD family. It depends on Mg(2+) as a cofactor.

The catalysed reaction is [protein-PII]-L-tyrosine + UTP = [protein-PII]-uridylyl-L-tyrosine + diphosphate. The enzyme catalyses [protein-PII]-uridylyl-L-tyrosine + H2O = [protein-PII]-L-tyrosine + UMP + H(+). Uridylyltransferase (UTase) activity is inhibited by glutamine, while glutamine activates uridylyl-removing (UR) activity. Its function is as follows. Modifies, by uridylylation and deuridylylation, the PII regulatory proteins (GlnB and homologs), in response to the nitrogen status of the cell that GlnD senses through the glutamine level. Under low glutamine levels, catalyzes the conversion of the PII proteins and UTP to PII-UMP and PPi, while under higher glutamine levels, GlnD hydrolyzes PII-UMP to PII and UMP (deuridylylation). Thus, controls uridylylation state and activity of the PII proteins, and plays an important role in the regulation of nitrogen assimilation and metabolism. The polypeptide is Bifunctional uridylyltransferase/uridylyl-removing enzyme (Legionella pneumophila (strain Paris)).